Here is a 370-residue protein sequence, read N- to C-terminus: MTVDAVRVELGARAYEVRIGPGLIARAGAEIAPLLRRPKVAILTDETVAGLHLDPFRQALAEAGIASSALALPAGEATKGWPQFARAVEWLLEEKVERRDVVVALGGGVIGDLAGFAAAVLRRGVRFVQVPTTLLAQVDSSVGGKTGINTAQGKNLVGAFHQPSLVLADIGVLETLPPRDFRAGYGEVVKYGLLGDADFYEWLEEAGPRLAADAEARQRAVRRSVEMKAEIVARDETEEGDRALLNLGHTFCHALEKATGYSGRLLHGEGVAIGCALAFELSQRLGLCAQEAPSRLRAHLRAMGMKVDLRDIPGDLPSAEALLALMAQDKKVVDGKLRFILARGIGQAFVADDVPGDVVRTLLEDALAQR.

NAD(+) contacts are provided by residues 108-112 (GVIGD), 132-133 (TT), Lys145, and Lys154. The Zn(2+) site is built by Glu187, His249, and His267.

This sequence belongs to the sugar phosphate cyclases superfamily. Dehydroquinate synthase family. Co(2+) is required as a cofactor. The cofactor is Zn(2+). NAD(+) serves as cofactor.

The protein resides in the cytoplasm. The catalysed reaction is 7-phospho-2-dehydro-3-deoxy-D-arabino-heptonate = 3-dehydroquinate + phosphate. Its pathway is metabolic intermediate biosynthesis; chorismate biosynthesis; chorismate from D-erythrose 4-phosphate and phosphoenolpyruvate: step 2/7. Functionally, catalyzes the conversion of 3-deoxy-D-arabino-heptulosonate 7-phosphate (DAHP) to dehydroquinate (DHQ). This is 3-dehydroquinate synthase from Cereibacter sphaeroides (strain ATCC 17023 / DSM 158 / JCM 6121 / CCUG 31486 / LMG 2827 / NBRC 12203 / NCIMB 8253 / ATH 2.4.1.) (Rhodobacter sphaeroides).